Consider the following 249-residue polypeptide: uncharacterized protein (249 aa).

7–14 (GKGGCGKS) contacts ATP.

This is an uncharacterized protein from Methanocaldococcus jannaschii (strain ATCC 43067 / DSM 2661 / JAL-1 / JCM 10045 / NBRC 100440) (Methanococcus jannaschii).